The sequence spans 106 residues: uncharacterized protein (106 aa).

This is an uncharacterized protein from Mycoplasma pneumoniae (strain ATCC 29342 / M129 / Subtype 1) (Mycoplasmoides pneumoniae).